The following is a 397-amino-acid chain: LIM/homeobox protein Lhx9 (397 aa).

2 consecutive LIM zinc-binding domains span residues 69–130 and 131–193; these read ALCA…RFSV and QRCA…LLQG. 3 disordered regions span residues 248-272, 330-365, and 378-397; these read ENEADHLDRDQQPYPPSQKTKRMRT, ENGGVDKADGTSLPAPPSADSGALTPPGTATTLTDL, and SNMDSHEPGSPSQTTLTNLF. Residues 267–326 constitute a DNA-binding region (homeobox); the sequence is TKRMRTSFKHHQLRTMKSYFAINHNPDAKDLKQLAQKTGLTKRVLQVWFQNARAKFRRNL. A compositionally biased stretch (low complexity) spans 353-365; that stretch reads LTPPGTATTLTDL. The span at 387–397 shows a compositional bias: polar residues; that stretch reads SPSQTTLTNLF.

As to quaternary structure, interacts with LDB1 and LDB2. Expressed in the dorsal thalamus and inner nuclei of the cerebellum.

It is found in the nucleus. Functionally, involved in gonadal development. This chain is LIM/homeobox protein Lhx9 (Lhx9), found in Mus musculus (Mouse).